Consider the following 162-residue polypeptide: NADH-quinone oxidoreductase subunit C (162 aa).

The protein belongs to the complex I 30 kDa subunit family. In terms of assembly, NDH-1 is composed of 14 different subunits. Subunits NuoB, C, D, E, F, and G constitute the peripheral sector of the complex.

Its subcellular location is the cell inner membrane. It carries out the reaction a quinone + NADH + 5 H(+)(in) = a quinol + NAD(+) + 4 H(+)(out). In terms of biological role, NDH-1 shuttles electrons from NADH, via FMN and iron-sulfur (Fe-S) centers, to quinones in the respiratory chain. The immediate electron acceptor for the enzyme in this species is believed to be ubiquinone. Couples the redox reaction to proton translocation (for every two electrons transferred, four hydrogen ions are translocated across the cytoplasmic membrane), and thus conserves the redox energy in a proton gradient. This chain is NADH-quinone oxidoreductase subunit C, found in Geobacter sulfurreducens (strain ATCC 51573 / DSM 12127 / PCA).